Here is a 588-residue protein sequence, read N- to C-terminus: NADP-dependent malic enzyme 3 (588 aa).

N-acetylglycine is present on G2. Y136 functions as the Proton donor in the catalytic mechanism. R189 provides a ligand contact to NADP(+). K207 serves as the catalytic Proton acceptor. Residues E279, D280, and D303 each coordinate a divalent metal cation. Residues D303, 332 to 348, and N444 each bind NADP(+); that span reads LFLGAGEAGTGIAELIA.

This sequence belongs to the malic enzymes family. Homohexamers and homooctamers. Requires Mg(2+) as cofactor. It depends on Mn(2+) as a cofactor. As to expression, mostly expressed in flowers, and, to a lower extent, in stems. In leaves and stems, restricted to the trichomes and trichome basal cells. Also present in the stipules flanking the base of the inflorescence bract leaves and in the meristematic zone of developing lateral roots. In flowers, present in pollen and the abscission zone of developing siliques.

The protein localises to the cytoplasm. The catalysed reaction is (S)-malate + NADP(+) = pyruvate + CO2 + NADPH. It catalyses the reaction oxaloacetate + H(+) = pyruvate + CO2. Slightly activated by succinate and aspartate. Repressed by fumarate, malate, oxaloacetate and glucose. The polypeptide is NADP-dependent malic enzyme 3 (NADP-ME3) (Arabidopsis thaliana (Mouse-ear cress)).